Reading from the N-terminus, the 301-residue chain is Probable aspartoacylase (301 aa).

Zn(2+) is bound by residues histidine 13 and glutamate 16. Substrate contacts are provided by residues arginine 54 and asparagine 61–arginine 62. Histidine 105 contributes to the Zn(2+) binding site. Positions 163 and 273 each coordinate substrate.

Belongs to the AspA/AstE family. Aspartoacylase subfamily. It depends on Zn(2+) as a cofactor.

The catalysed reaction is an N-acyl-L-aspartate + H2O = a carboxylate + L-aspartate. The protein is Probable aspartoacylase of Prochlorococcus marinus (strain MIT 9301).